The primary structure comprises 196 residues: Protein GrpE (196 aa).

Residues 1–24 form a disordered region; that stretch reads MAENERTTENFQPQDPSYAEAATT.

Belongs to the GrpE family. As to quaternary structure, homodimer.

The protein localises to the cytoplasm. In terms of biological role, participates actively in the response to hyperosmotic and heat shock by preventing the aggregation of stress-denatured proteins, in association with DnaK and GrpE. It is the nucleotide exchange factor for DnaK and may function as a thermosensor. Unfolded proteins bind initially to DnaJ; upon interaction with the DnaJ-bound protein, DnaK hydrolyzes its bound ATP, resulting in the formation of a stable complex. GrpE releases ADP from DnaK; ATP binding to DnaK triggers the release of the substrate protein, thus completing the reaction cycle. Several rounds of ATP-dependent interactions between DnaJ, DnaK and GrpE are required for fully efficient folding. The protein is Protein GrpE of Gloeobacter violaceus (strain ATCC 29082 / PCC 7421).